Here is a 387-residue protein sequence, read N- to C-terminus: Probable serine protease FE772_23060 (387 aa).

The protein belongs to the peptidase S1 family.

Its function is as follows. Possibly a dedicated protease for substrate gasdermin bGSDM; cleaves the bGSDM precursor, releasing the pore-forming moiety, which integrates into the membrane and triggers cell death. Involved in defense against bacteriophages. When this probable 4 gene operon (bGSDM-FE772_23060-FE772_23065-FE772_23070) is inserted into E.coli it provides nearly 100-fold protection against phages T5 and T6 and about 8-fold against phage T4. The operon without bGSDM no longer protects against phage. The protein is Probable serine protease FE772_23060 of Lysobacter enzymogenes.